A 91-amino-acid polypeptide reads, in one-letter code: Large ribosomal subunit protein bL27 (91 aa).

The tract at residues 1–22 is disordered; the sequence is MAHKKAGGSSRNGRDSDGRRLG.

Belongs to the bacterial ribosomal protein bL27 family.

This is Large ribosomal subunit protein bL27 from Beijerinckia indica subsp. indica (strain ATCC 9039 / DSM 1715 / NCIMB 8712).